We begin with the raw amino-acid sequence, 766 residues long: MAEGVRRLLGKPGSVSLQPYIKLLKTIEEREEALRKLSDAELTEVATELGNAELPYDRDDLAELCALGREAARRTLGERPFDTQLIGMMALLDGHVAEMATGEGKTLTGALAAVGFALRGQRVHVLSVNDYLARRDAEWMRPLYTLLGVEVGWISQESTTEERRAAYAADITYASVSELGFDVLRDRLATDVSELVVPEPNVAIIDEADSVLVDEARVPLVLAGAAEPAESDAAMAELVRRLRPGIDYKVDDDGRNVHLTDTGINVVEKALGGVDLFSAEDTTLLSRVNLALHAHALLHRDVHYVVRDGKVRLINESRGRIALLQRWPDGLQAAVEAKEHLTPSETGEVLDSITVQSLVLRYPIRCGMTGTAMAVAEQLREFYELEVAVIAPNKPNIRIDEEDRLYATAEEKEEAVVEKVKEVHATGRPILIGTQDVAESERLAKRLRRAGLECVVLNAKNDAEEAAVIAEAGTYGRITVSTQMAGRGTDIRLGGSDMRDRDRVVKTGGLYVIGYGRYPSSRLDDQLRGRAGRQGDPGGSVFYVSVEDDLITTNLPEAKGYRVSSADGEITDPAWKEMVNHAQRIAEGQLLELHRNTWRYNQIIDVQRSVVLEQRRAVLHEDLGSRQLAVDCPETYQRLVEEVGEEEVARAARLVTLYHLDRGWADHNAFLADLREGIHLRFLGRRDPLDEFNRDAVPAFKGFLDEARARAAEMFEKLEVVDGRLDVAAAGVKRPSTTWTYMVQDQPFSTDLENIVGRVKNLMGRD.

Residues Q84, 102 to 106 (GEGKT), and D490 contribute to the ATP site.

The protein belongs to the SecA family. In terms of assembly, monomer and homodimer. Part of the essential Sec protein translocation apparatus which comprises SecA, SecYEG and auxiliary proteins SecDF. Other proteins may also be involved.

Its subcellular location is the cell membrane. It is found in the cytoplasm. The enzyme catalyses ATP + H2O + cellular proteinSide 1 = ADP + phosphate + cellular proteinSide 2.. In terms of biological role, part of the Sec protein translocase complex. Interacts with the SecYEG preprotein conducting channel. Has a central role in coupling the hydrolysis of ATP to the transfer of proteins into and across the cell membrane, serving as an ATP-driven molecular motor driving the stepwise translocation of polypeptide chains across the membrane. In Thermobifida fusca (strain YX), this protein is Protein translocase subunit SecA 2.